A 240-amino-acid polypeptide reads, in one-letter code: Probable transcriptional regulatory protein HPP12_0160 (240 aa).

Belongs to the TACO1 family.

It localises to the cytoplasm. This chain is Probable transcriptional regulatory protein HPP12_0160, found in Helicobacter pylori (strain P12).